Here is a 118-residue protein sequence, read N- to C-terminus: Large ribosomal subunit protein bL20 (118 aa).

The protein belongs to the bacterial ribosomal protein bL20 family.

Binds directly to 23S ribosomal RNA and is necessary for the in vitro assembly process of the 50S ribosomal subunit. It is not involved in the protein synthesizing functions of that subunit. The chain is Large ribosomal subunit protein bL20 from Trichormus variabilis (strain ATCC 29413 / PCC 7937) (Anabaena variabilis).